A 300-amino-acid polypeptide reads, in one-letter code: Junctional adhesion molecule A (300 aa).

The signal sequence occupies residues 1 to 26; that stretch reads MGTEGKAGSKLLFLFTSMILGSLVQG. Over 27–238 the chain is Extracellular; it reads KGSVYSPQTA…MEAVELNVGG (212 aa). 2 Ig-like V-type domains span residues 28–122 and 134–228; these read GSVY…GEVS and PTVS…EAVR. 2 disulfides stabilise this stretch: C49–C108 and C152–C212. N-linked (GlcNAc...) asparagine glycosylation is present at N185. The chain crosses the membrane as a helical span at residues 239 to 259; that stretch reads IVAAVLVTLILLGLLIFGIWF. Residues 260–300 are Cytoplasmic-facing; the sequence is AYSRGYFERTKKGTAPGKKVIYSQPSARSEGEFKQTSSFLV. Phosphoserine occurs at positions 282, 285, and 288.

The protein belongs to the immunoglobulin superfamily. Interacts with the ninth PDZ domain of MPDZ. Interacts with the first PDZ domain of PARD3. The association between PARD3 and PARD6B probably disrupts this interaction. Interacts with ITGAL (via I-domain). Interacts with CD151. In terms of processing, N-glycosylated.

The protein localises to the cell junction. It is found in the tight junction. It localises to the cell membrane. Functionally, seems to play a role in epithelial tight junction formation. Appears early in primordial forms of cell junctions and recruits PARD3. The association of the PARD6-PARD3 complex may prevent the interaction of PARD3 with JAM1, thereby preventing tight junction assembly. Plays a role in regulating monocyte transmigration involved in integrity of epithelial barrier. Ligand for integrin alpha-L/beta-2 involved in memory T-cell and neutrophil transmigration. The polypeptide is Junctional adhesion molecule A (F11r) (Rattus norvegicus (Rat)).